The sequence spans 467 residues: ATP synthase subunit beta (467 aa).

G154 to T161 contacts ATP.

This sequence belongs to the ATPase alpha/beta chains family. As to quaternary structure, F-type ATPases have 2 components, CF(1) - the catalytic core - and CF(0) - the membrane proton channel. CF(1) has five subunits: alpha(3), beta(3), gamma(1), delta(1), epsilon(1). CF(0) has three main subunits: a(1), b(2) and c(9-12). The alpha and beta chains form an alternating ring which encloses part of the gamma chain. CF(1) is attached to CF(0) by a central stalk formed by the gamma and epsilon chains, while a peripheral stalk is formed by the delta and b chains.

The protein resides in the cell inner membrane. The catalysed reaction is ATP + H2O + 4 H(+)(in) = ADP + phosphate + 5 H(+)(out). Functionally, produces ATP from ADP in the presence of a proton gradient across the membrane. The catalytic sites are hosted primarily by the beta subunits. This is ATP synthase subunit beta from Petrotoga mobilis (strain DSM 10674 / SJ95).